The sequence spans 201 residues: 3-isopropylmalate dehydratase small subunit (201 aa).

This sequence belongs to the LeuD family. LeuD type 1 subfamily. In terms of assembly, heterodimer of LeuC and LeuD.

The catalysed reaction is (2R,3S)-3-isopropylmalate = (2S)-2-isopropylmalate. It participates in amino-acid biosynthesis; L-leucine biosynthesis; L-leucine from 3-methyl-2-oxobutanoate: step 2/4. Its function is as follows. Catalyzes the isomerization between 2-isopropylmalate and 3-isopropylmalate, via the formation of 2-isopropylmaleate. This is 3-isopropylmalate dehydratase small subunit from Shewanella amazonensis (strain ATCC BAA-1098 / SB2B).